Here is a 1211-residue protein sequence, read N- to C-terminus: Sterol 3-beta-glucosyltransferase (1211 aa).

The segment covering 1–10 (MSQLRPRDSS) has biased composition (basic and acidic residues). The interval 1–61 (MSQLRPRDSS…DETEAEDDID (61 aa)) is disordered. The 40-residue stretch at 196–235 (EKLKTTFDLSDDDEFVNDYPCWLLHEVFLQGHIYITSRYL) folds into the GRAM 1 domain. Residues 248-347 (VTMSGALSIR…WVTDLRKHIF (100 aa)) form the PH domain. Disordered regions lie at residues 422–452 (LTDS…KLSR) and 500–531 (VVPN…PSNW). The segment covering 423–432 (TDSDSSESDS) has biased composition (acidic residues). Positions 507–525 (SELKQDHAGDAPKDSEEPS) are enriched in basic and acidic residues. The 67-residue stretch at 586 to 652 (SRFRKHFSLP…SDIENVYNLK (67 aa)) folds into the GRAM 2 domain. Residues S770, R771, D773, N1046, N1072, V1073, H1075, H1088, S1091, G1092, T1093, D1112, and Q1113 each contribute to the UDP-alpha-D-glucose site.

This sequence belongs to the glycosyltransferase 28 family.

It localises to the cytoplasm. The protein localises to the preautophagosomal structure membrane. It carries out the reaction a sterol + UDP-alpha-D-glucose = a sterol 3-beta-D-glucoside + UDP + H(+). It catalyses the reaction ergosterol + UDP-alpha-D-glucose = ergosteryl 3-beta-D-glucoside + UDP + H(+). In terms of biological role, sterol glycosyltransferase responsible for the glycosylation of ergosterol to form ergosterol-glucoside. Shows also activity in vitro on other sterols such as cholesterol, beta-sitosterol, stigmasterol and tomatidine. Probable sterol 3-beta-glucosyltransferase that mediates autophagic degradation of peroxisomes (pexophagy). The polypeptide is Sterol 3-beta-glucosyltransferase (Komagataella phaffii (strain GS115 / ATCC 20864) (Yeast)).